The sequence spans 288 residues: 4-diphosphocytidyl-2-C-methyl-D-erythritol kinase (288 aa).

Lys-12 is an active-site residue. Residue 95–105 (PAGGGVGGGSS) participates in ATP binding. Asp-137 is a catalytic residue.

It belongs to the GHMP kinase family. IspE subfamily.

It carries out the reaction 4-CDP-2-C-methyl-D-erythritol + ATP = 4-CDP-2-C-methyl-D-erythritol 2-phosphate + ADP + H(+). It participates in isoprenoid biosynthesis; isopentenyl diphosphate biosynthesis via DXP pathway; isopentenyl diphosphate from 1-deoxy-D-xylulose 5-phosphate: step 3/6. Its function is as follows. Catalyzes the phosphorylation of the position 2 hydroxy group of 4-diphosphocytidyl-2C-methyl-D-erythritol. The protein is 4-diphosphocytidyl-2-C-methyl-D-erythritol kinase of Halorhodospira halophila (strain DSM 244 / SL1) (Ectothiorhodospira halophila (strain DSM 244 / SL1)).